Consider the following 45-residue polypeptide: Large ribosomal subunit protein bL34 (45 aa).

The segment at 26 to 45 is disordered; that stretch reads RAGRSILSARRSKGRSQLSA.

The protein belongs to the bacterial ribosomal protein bL34 family.

The sequence is that of Large ribosomal subunit protein bL34 from Parafrankia sp. (strain EAN1pec).